The following is a 181-amino-acid chain: Oligoribonuclease (181 aa).

An Exonuclease domain is found at 8–171; the sequence is LVWIDMEMTG…DDIRESIAEL (164 aa). Residue tyrosine 129 is part of the active site.

Belongs to the oligoribonuclease family.

The protein localises to the cytoplasm. Functionally, 3'-to-5' exoribonuclease specific for small oligoribonucleotides. In Aeromonas hydrophila subsp. hydrophila (strain ATCC 7966 / DSM 30187 / BCRC 13018 / CCUG 14551 / JCM 1027 / KCTC 2358 / NCIMB 9240 / NCTC 8049), this protein is Oligoribonuclease.